Reading from the N-terminus, the 178-residue chain is Cytidylate kinase (178 aa).

7-15 (GLPGTGTTT) is an ATP binding site.

It belongs to the cytidylate kinase family. Type 2 subfamily.

Its subcellular location is the cytoplasm. The catalysed reaction is CMP + ATP = CDP + ADP. It catalyses the reaction dCMP + ATP = dCDP + ADP. In Methanococcus maripaludis (strain DSM 14266 / JCM 13030 / NBRC 101832 / S2 / LL), this protein is Cytidylate kinase.